We begin with the raw amino-acid sequence, 348 residues long: NADH-ubiquinone oxidoreductase chain 2 (348 aa).

Helical transmembrane passes span 3-23 (PYVL…TFAS), 25-45 (HWLL…RLMA), 60-80 (FLTQ…NAWA), 99-119 (MMAL…PEVL), 122-142 (LDLT…FALI), 150-170 (NPML…WGGL), 178-196 (ILAY…ILQY), 200-219 (LTLI…FLSL), 246-266 (LTLL…KWLI), 274-294 (DLPA…YFYL), and 328-348 (LMMI…ALFF).

Belongs to the complex I subunit 2 family.

It localises to the mitochondrion inner membrane. The enzyme catalyses a ubiquinone + NADH + 5 H(+)(in) = a ubiquinol + NAD(+) + 4 H(+)(out). Core subunit of the mitochondrial membrane respiratory chain NADH dehydrogenase (Complex I) that is believed to belong to the minimal assembly required for catalysis. Complex I functions in the transfer of electrons from NADH to the respiratory chain. The immediate electron acceptor for the enzyme is believed to be ubiquinone. The polypeptide is NADH-ubiquinone oxidoreductase chain 2 (MT-ND2) (Formosania lacustris (Oriental stream loach)).